Here is a 782-residue protein sequence, read N- to C-terminus: HHIP-like protein 1 (782 aa).

An N-terminal signal peptide occupies residues 1-19; it reads MARARAGALLALWVLGAAA. 4 cysteine pairs are disulfide-bonded: C181/C521, C185/C528, C399/C417, and C484/C584. Residue N234 is glycosylated (N-linked (GlcNAc...) asparagine). The disordered stretch occupies residues 604–666; it reads EKFIPKTRST…RRGRLNSASR (63 aa). A compositionally biased stretch (low complexity) spans 610–623; the sequence is TRSTPRPTARAPTR. Residues 632 to 642 are compositionally biased toward pro residues; sequence AAPPAPTPRPA. The SRCR domain occupies 673–776; the sequence is VRLVRPAGLS…HDEDAGVVCS (104 aa). 3 disulfide bridges follow: C700/C765, C713/C775, and C745/C755.

Belongs to the HHIP family.

Its subcellular location is the secreted. In Homo sapiens (Human), this protein is HHIP-like protein 1 (HHIPL1).